A 272-amino-acid chain; its full sequence is MIKVVPKVLVMSGYGINCETETAHTFQKAGAKTDIVHINDLIAGKKKMADYEIIMFPGGFSYGDDTGSGNAFANKIKNNLFDDLKEFINSGKLILGICNGFQVMTNLGLFALPSTDYGERISALEANTNNRYECRWVHIKENESICVFTKGIDIIHVPIAHGEGRFYCDEKTYLELKENKQIVFTYCDSEGNPANKEYPLNPNGAYYDIAGICDKSGRIMGLMPHPERSLYSISEPEYQLKKEIAKRNGEIIPEFIESNIQIFKNAVEYFNK.

In terms of domain architecture, Glutamine amidotransferase type-1 spans V8–E243. The Nucleophile role is filled by C98. Active-site residues include H225, E227, and E235.

In terms of assembly, part of the FGAM synthase complex composed of 1 PurL, 1 PurQ and 2 PurS subunits.

It is found in the cytoplasm. The enzyme catalyses N(2)-formyl-N(1)-(5-phospho-beta-D-ribosyl)glycinamide + L-glutamine + ATP + H2O = 2-formamido-N(1)-(5-O-phospho-beta-D-ribosyl)acetamidine + L-glutamate + ADP + phosphate + H(+). The catalysed reaction is L-glutamine + H2O = L-glutamate + NH4(+). The protein operates within purine metabolism; IMP biosynthesis via de novo pathway; 5-amino-1-(5-phospho-D-ribosyl)imidazole from N(2)-formyl-N(1)-(5-phospho-D-ribosyl)glycinamide: step 1/2. Its function is as follows. Part of the phosphoribosylformylglycinamidine synthase complex involved in the purines biosynthetic pathway. Catalyzes the ATP-dependent conversion of formylglycinamide ribonucleotide (FGAR) and glutamine to yield formylglycinamidine ribonucleotide (FGAM) and glutamate. The FGAM synthase complex is composed of three subunits. PurQ produces an ammonia molecule by converting glutamine to glutamate. PurL transfers the ammonia molecule to FGAR to form FGAM in an ATP-dependent manner. PurS interacts with PurQ and PurL and is thought to assist in the transfer of the ammonia molecule from PurQ to PurL. This Methanococcus maripaludis (strain C7 / ATCC BAA-1331) protein is Phosphoribosylformylglycinamidine synthase subunit PurQ.